We begin with the raw amino-acid sequence, 957 residues long: Valine--tRNA ligase (957 aa).

Residues 45–55 (PNVTGSLHMGH) carry the 'HIGH' region motif. Residues 571–575 (KMSKS) carry the 'KMSKS' region motif. K574 provides a ligand contact to ATP. The stretch at 887–946 (VVDFAAEQARLEKELGKAEADIKRAEAKLANEKFVANAAEEVVEEEREKREAAVARKVKI) forms a coiled coil.

The protein belongs to the class-I aminoacyl-tRNA synthetase family. ValS type 1 subfamily. Monomer.

It localises to the cytoplasm. The catalysed reaction is tRNA(Val) + L-valine + ATP = L-valyl-tRNA(Val) + AMP + diphosphate. Its function is as follows. Catalyzes the attachment of valine to tRNA(Val). As ValRS can inadvertently accommodate and process structurally similar amino acids such as threonine, to avoid such errors, it has a 'posttransfer' editing activity that hydrolyzes mischarged Thr-tRNA(Val) in a tRNA-dependent manner. This is Valine--tRNA ligase from Rhodopseudomonas palustris (strain ATCC BAA-98 / CGA009).